The primary structure comprises 117 residues: Large ribosomal subunit protein bL20 (117 aa).

It belongs to the bacterial ribosomal protein bL20 family.

Binds directly to 23S ribosomal RNA and is necessary for the in vitro assembly process of the 50S ribosomal subunit. It is not involved in the protein synthesizing functions of that subunit. This is Large ribosomal subunit protein bL20 from Roseiflexus sp. (strain RS-1).